The chain runs to 475 residues: Kynureninase (475 aa).

Residues Leu142, Thr143, 170–173, Asp255, His258, and Tyr280 each bind pyridoxal 5'-phosphate; that span reads FPSD. The residue at position 281 (Lys281) is an N6-(pyridoxal phosphate)lysine. The pyridoxal 5'-phosphate site is built by Trp320 and Asn348.

It belongs to the kynureninase family. In terms of assembly, homodimer. Pyridoxal 5'-phosphate is required as a cofactor.

Its subcellular location is the cytoplasm. The catalysed reaction is L-kynurenine + H2O = anthranilate + L-alanine + H(+). It carries out the reaction 3-hydroxy-L-kynurenine + H2O = 3-hydroxyanthranilate + L-alanine + H(+). It functions in the pathway amino-acid degradation; L-kynurenine degradation; L-alanine and anthranilate from L-kynurenine: step 1/1. It participates in cofactor biosynthesis; NAD(+) biosynthesis; quinolinate from L-kynurenine: step 2/3. Its function is as follows. Catalyzes the cleavage of L-kynurenine (L-Kyn) and L-3-hydroxykynurenine (L-3OHKyn) into anthranilic acid (AA) and 3-hydroxyanthranilic acid (3-OHAA), respectively. The sequence is that of Kynureninase (bna5) from Botryotinia fuckeliana (strain B05.10) (Noble rot fungus).